The sequence spans 120 residues: NAD(P)H-quinone oxidoreductase subunit 3, chloroplastic (120 aa).

3 consecutive transmembrane segments (helical) span residues 9–29 (IFWA…IISG), 60–80 (ICYY…VFLY), and 88–108 (ILGV…IVGS).

It belongs to the complex I subunit 3 family. NDH is composed of at least 16 different subunits, 5 of which are encoded in the nucleus.

The protein localises to the plastid. Its subcellular location is the chloroplast thylakoid membrane. It catalyses the reaction a plastoquinone + NADH + (n+1) H(+)(in) = a plastoquinol + NAD(+) + n H(+)(out). It carries out the reaction a plastoquinone + NADPH + (n+1) H(+)(in) = a plastoquinol + NADP(+) + n H(+)(out). NDH shuttles electrons from NAD(P)H:plastoquinone, via FMN and iron-sulfur (Fe-S) centers, to quinones in the photosynthetic chain and possibly in a chloroplast respiratory chain. The immediate electron acceptor for the enzyme in this species is believed to be plastoquinone. Couples the redox reaction to proton translocation, and thus conserves the redox energy in a proton gradient. This is NAD(P)H-quinone oxidoreductase subunit 3, chloroplastic from Morus indica (Mulberry).